Consider the following 664-residue polypeptide: DNA ligase (664 aa).

Residues 30-34 (DFEFD), 79-80 (SL), and glutamate 109 each bind NAD(+). The N6-AMP-lysine intermediate role is filled by lysine 111. Residues arginine 132, glutamate 169, lysine 284, and lysine 308 each coordinate NAD(+). The Zn(2+) site is built by cysteine 403, cysteine 406, cysteine 421, and cysteine 427. Residues 586–664 (NRSEKLKGLT…NEDAFLNMLE (79 aa)) enclose the BRCT domain.

This sequence belongs to the NAD-dependent DNA ligase family. LigA subfamily. The cofactor is Mg(2+). Mn(2+) serves as cofactor.

It carries out the reaction NAD(+) + (deoxyribonucleotide)n-3'-hydroxyl + 5'-phospho-(deoxyribonucleotide)m = (deoxyribonucleotide)n+m + AMP + beta-nicotinamide D-nucleotide.. DNA ligase that catalyzes the formation of phosphodiester linkages between 5'-phosphoryl and 3'-hydroxyl groups in double-stranded DNA using NAD as a coenzyme and as the energy source for the reaction. It is essential for DNA replication and repair of damaged DNA. This Parabacteroides distasonis (strain ATCC 8503 / DSM 20701 / CIP 104284 / JCM 5825 / NCTC 11152) protein is DNA ligase.